The sequence spans 710 residues: Adenylosuccinate synthetase (710 aa).

Disordered stretches follow at residues 1–57 (MPVR…NHAK) and 82–112 (MDDE…SAQC). The segment covering 11–25 (NNSSSGVSNALSSSS) has biased composition (low complexity). The span at 32-43 (SPSSRENSTPLS) shows a compositional bias: polar residues. GTP is bound by residues 180-186 (GDEGKGK) and 210-212 (GHT). Residue Asp-181 is the Proton acceptor of the active site. Residues Asp-181 and Gly-210 each contribute to the Mg(2+) site. IMP contacts are provided by residues 181-184 (DEGK), 208-211 (NAGH), Thr-295, Lys-309, Gln-421, Thr-437, and Lys-567. Catalysis depends on His-211, which acts as the Proton donor. Residue 563-569 (AVTKKPR) coordinates substrate. GTP contacts are provided by residues Arg-569 and 697 to 699 (GNG).

It belongs to the adenylosuccinate synthetase family. Homodimer. Requires Mg(2+) as cofactor.

It localises to the cytoplasm. The catalysed reaction is IMP + L-aspartate + GTP = N(6)-(1,2-dicarboxyethyl)-AMP + GDP + phosphate + 2 H(+). It functions in the pathway purine metabolism; AMP biosynthesis via de novo pathway; AMP from IMP: step 1/2. Plays an important role in the salvage pathway for purine nucleotide biosynthesis. Catalyzes the first committed step in the biosynthesis of AMP from IMP. The protein is Adenylosuccinate synthetase of Leishmania braziliensis.